Here is a 319-residue protein sequence, read N- to C-terminus: Acetyl-coenzyme A carboxylase carboxyl transferase subunit alpha (319 aa).

Residues 35 to 296 (NIDEEVHRLR…KAQLLEDLAD (262 aa)) form the CoA carboxyltransferase C-terminal domain.

This sequence belongs to the AccA family. In terms of assembly, acetyl-CoA carboxylase is a heterohexamer composed of biotin carboxyl carrier protein (AccB), biotin carboxylase (AccC) and two subunits each of ACCase subunit alpha (AccA) and ACCase subunit beta (AccD).

It localises to the cytoplasm. It carries out the reaction N(6)-carboxybiotinyl-L-lysyl-[protein] + acetyl-CoA = N(6)-biotinyl-L-lysyl-[protein] + malonyl-CoA. It participates in lipid metabolism; malonyl-CoA biosynthesis; malonyl-CoA from acetyl-CoA: step 1/1. Its function is as follows. Component of the acetyl coenzyme A carboxylase (ACC) complex. First, biotin carboxylase catalyzes the carboxylation of biotin on its carrier protein (BCCP) and then the CO(2) group is transferred by the carboxyltransferase to acetyl-CoA to form malonyl-CoA. The sequence is that of Acetyl-coenzyme A carboxylase carboxyl transferase subunit alpha from Salmonella agona (strain SL483).